Reading from the N-terminus, the 231-residue chain is Urease subunit gamma/beta (231 aa).

The tract at residues 1–101 is urease gamma; sequence MLLTPTELER…LVTVHQPIRP (101 aa). Positions 102–231 are urease beta; sequence GQLPLAVMPT…RARAQFFKGA (130 aa).

This sequence in the N-terminal section; belongs to the urease gamma subunit family. It in the C-terminal section; belongs to the urease beta subunit family. In terms of assembly, heterohexamer of 3 UreC (alpha) and 3 UreAB (gamma/beta) subunits.

It localises to the cytoplasm. The catalysed reaction is urea + 2 H2O + H(+) = hydrogencarbonate + 2 NH4(+). It functions in the pathway nitrogen metabolism; urea degradation; CO(2) and NH(3) from urea (urease route): step 1/1. This Pseudomonas syringae pv. syringae (strain B728a) protein is Urease subunit gamma/beta.